Reading from the N-terminus, the 697-residue chain is Disintegrin and metalloproteinase domain-containing protein 26A (697 aa).

The first 22 residues, 1 to 22 (MFLKFCLWTMFFFSAWSPIGHA), serve as a signal peptide directing secretion. A propeptide spanning residues 23-187 (KYSSLLEVVT…NAPTLLQIPY (165 aa)) is cleaved from the precursor. N-linked (GlcNAc...) asparagine glycosylation occurs at Asn-127. The short motif at 159–166 (MRCGLSEE) is the Cysteine switch element. A Zn(2+)-binding site is contributed by Cys-161. Residues 188-671 (ENWWTHHRFI…PPLPLSHSKW (484 aa)) lie on the Extracellular side of the membrane. A Peptidase M12B domain is found at 195–385 (RFIEYFVVLD…TKRSCLYDIP (191 aa)). Asn-214 carries an N-linked (GlcNAc...) asparagine glycan. 3 disulfide bridges follow: Cys-305-Cys-380, Cys-344-Cys-366, and Cys-346-Cys-351. Residue His-329 participates in Zn(2+) binding. The active site involves Glu-330. Residues His-333 and His-339 each contribute to the Zn(2+) site. N-linked (GlcNAc...) asparagine glycosylation is found at Asn-365, Asn-391, Asn-464, Asn-506, Asn-531, and Asn-573. A Disintegrin domain is found at 392-478 (LTVCGNKVVE…ECPGDVYKAD (87 aa)). Cys-450 and Cys-470 are disulfide-bonded. An EGF-like domain is found at 616-649 (LVSNCSPQLYHMQGICNNKQHCHCGVTWKPPDCQ). Cystine bridges form between Cys-620/Cys-631 and Cys-639/Cys-648. A helical membrane pass occupies residues 672–692 (IVYILIVLDVCIVIIIYLFSF). Topologically, residues 693–697 (YKLSK) are cytoplasmic.

Zn(2+) is required as a cofactor. In terms of tissue distribution, expressed in sperm (at protein level). Expressed specifically in testis.

It localises to the membrane. Its function is as follows. Sperm surface membrane protein that may be involved in spermatogenesis and fertilization. This Mus musculus (Mouse) protein is Disintegrin and metalloproteinase domain-containing protein 26A.